Here is a 155-residue protein sequence, read N- to C-terminus: Large ribosomal subunit protein uL13 (155 aa).

Belongs to the universal ribosomal protein uL13 family. In terms of assembly, part of the 50S ribosomal subunit.

Its function is as follows. This protein is one of the early assembly proteins of the 50S ribosomal subunit, although it is not seen to bind rRNA by itself. It is important during the early stages of 50S assembly. This is Large ribosomal subunit protein uL13 from Aeropyrum pernix (strain ATCC 700893 / DSM 11879 / JCM 9820 / NBRC 100138 / K1).